The primary structure comprises 762 residues: ABC-type oligopeptide transporter ABCB9 (762 aa).

Transmembrane regions (helical) follow at residues 7–27, 47–67, 84–104, 116–136, 181–201, 221–241, 315–335, and 412–432; these read VVVT…IYAF, VLDL…ATIG, LVIT…LLLF, FWAL…LWGL, VAFL…ETFL, FTTA…AAGI, VFMF…FPII, and SGLT…HLVI. The ABC transmembrane type-1 domain maps to 184-467; it reads LVAASFFLIV…VGSVYSGLMQ (284 aa). In terms of domain architecture, ABC transporter spans 500–736; that stretch reads VDFENVTFTY…GGLYAKLVQR (237 aa). 535 to 542 serves as a coordination point for ATP; the sequence is GPSGSGKS.

It belongs to the ABC transporter superfamily. ABCB family. MHC peptide exporter (TC 3.A.1.209) subfamily. As to quaternary structure, homodimer. Interacts (via TMD0 region) with LAMP1; this interaction strongly stabilizes ABCB9 and protects ABCB9 against lysosomal degradation. Interacts (via TMD0 region) with LAMP2 (isoform LAMP-2B). Interacts (via TMD0) with YIF1B; this interaction allows (but is not essential) the ER-to-Golgi trafficking and strongly depends on a salt bridge within TMD0. As to expression, found in testis, particularly in the Sertoli cells of the seminiferous tubules. Also expressed in kidney, brain, heart, lung, spleen, thymus, intestine and testis. Higher expression detected in brain and testis than in thymus and intestine.

The protein resides in the lysosome membrane. It catalyses the reaction a [oligopeptide](in) + ATP + H2O = a [oligopeptide](out) + ADP + phosphate + H(+). Functionally, ATP-dependent low-affinity peptide transporter which translocates a broad spectrum of peptides from the cytosol to the lysosomal lumen for degradation. Displays a broad peptide length specificity from 6-mer up to at least 59-mer peptides with an optimum of 23-mers. Binds and transports smaller and larger peptides with the same affinity. Favors positively charged, aromatic or hydrophobic residues in the N- and C-terminal positions whereas negatively charged residues as well as asparagine and methionine are not favored. This Rattus norvegicus (Rat) protein is ABC-type oligopeptide transporter ABCB9.